A 678-amino-acid chain; its full sequence is Glycine--tRNA ligase beta subunit (678 aa).

Belongs to the class-II aminoacyl-tRNA synthetase family. In terms of assembly, tetramer of two alpha and two beta subunits.

It is found in the cytoplasm. The catalysed reaction is tRNA(Gly) + glycine + ATP = glycyl-tRNA(Gly) + AMP + diphosphate. The polypeptide is Glycine--tRNA ligase beta subunit (Streptococcus pneumoniae (strain 70585)).